A 427-amino-acid polypeptide reads, in one-letter code: Serine/threonine-protein kinase AFC2 (427 aa).

The region spanning Tyr-98 to Phe-423 is the Protein kinase domain. Residues Met-104–Val-112 and Lys-127 each bind ATP. The active-site Proton acceptor is Asp-223.

It belongs to the protein kinase superfamily. CMGC Ser/Thr protein kinase family. Lammer subfamily.

The enzyme catalyses L-seryl-[protein] + ATP = O-phospho-L-seryl-[protein] + ADP + H(+). The catalysed reaction is L-threonyl-[protein] + ATP = O-phospho-L-threonyl-[protein] + ADP + H(+). It catalyses the reaction L-tyrosyl-[protein] + ATP = O-phospho-L-tyrosyl-[protein] + ADP + H(+). The protein is Serine/threonine-protein kinase AFC2 (AFC2) of Arabidopsis thaliana (Mouse-ear cress).